Consider the following 229-residue polypeptide: Uracil-DNA glycosylase (229 aa).

Asp70 acts as the Proton acceptor in catalysis.

This sequence belongs to the uracil-DNA glycosylase (UDG) superfamily. UNG family.

Its subcellular location is the cytoplasm. The catalysed reaction is Hydrolyzes single-stranded DNA or mismatched double-stranded DNA and polynucleotides, releasing free uracil.. Functionally, excises uracil residues from the DNA which can arise as a result of misincorporation of dUMP residues by DNA polymerase or due to deamination of cytosine. The polypeptide is Uracil-DNA glycosylase (Chlamydia trachomatis serovar L2b (strain UCH-1/proctitis)).